We begin with the raw amino-acid sequence, 173 residues long: Rubredoxin-2 (173 aa).

Rubredoxin-like domains follow at residues 2 to 53 and 119 to 170; these read ASYK…FMLI and YLKW…YVLY. Fe cation is bound by residues Cys6, Cys9, Cys39, Cys42, Cys124, Cys127, Cys157, and Cys160.

The protein belongs to the rubredoxin family. The cofactor is Fe(3+).

The protein resides in the cytoplasm. The protein operates within hydrocarbon metabolism; alkane degradation. Its function is as follows. Involved in the hydrocarbon hydroxylating system, which transfers electrons from NADH to rubredoxin reductase and then through rubredoxin to alkane 1 monooxygenase. The protein is Rubredoxin-2 (alkG) of Ectopseudomonas oleovorans (Pseudomonas oleovorans).